Here is a 33-residue protein sequence, read N- to C-terminus: Brevinin-2JD (33 aa).

A disulfide bridge links Cys27 with Cys33.

In terms of tissue distribution, expressed by the skin glands.

Its subcellular location is the secreted. Functionally, has antibacterial activity against E.coli ATCC 25992 (MIC=38 uM), E.coli CIB 84492 (MIC=38 uM), S.aureus ATCC 25923 (MIC=19 uM) and S.aureus CIB 85462 (MIC=19 uM). Has antifungal activity against C.albicans (MIC=19 uM). Has weak hemolytic activity against rabbit erythrocytes. This is Brevinin-2JD from Odorrana jingdongensis (Jingdong frog).